The chain runs to 225 residues: Putative tyrosine-protein phosphatase OCA1 (225 aa).

Positions 1–11 (MTDNCREDDDN) are enriched in acidic residues. Positions 1-24 (MTDNCREDDDNLGTSGDNALSAPT) are disordered. Positions 12–24 (LGTSGDNALSAPT) are enriched in polar residues. The region spanning 42–196 (NFCPVERYLY…FDTKSVTIDK (155 aa)) is the Tyrosine-protein phosphatase domain. The active-site Phosphocysteine intermediate is the Cys-138.

The protein belongs to the protein-tyrosine phosphatase family.

It localises to the cytoplasm. It carries out the reaction O-phospho-L-tyrosyl-[protein] + H2O = L-tyrosyl-[protein] + phosphate. In terms of biological role, putative tyrosine-protein phosphatase required for protection against superoxide stress. The chain is Putative tyrosine-protein phosphatase OCA1 (OCA1) from Eremothecium gossypii (strain ATCC 10895 / CBS 109.51 / FGSC 9923 / NRRL Y-1056) (Yeast).